The chain runs to 261 residues: Claudin-18 (261 aa).

Over 1–6 (MSTTRC) the chain is Cytoplasmic. The helical transmembrane segment at 7–27 (QVVGFLLSILGLAGCIVATEM) threads the bilayer. The Extracellular portion of the chain corresponds to 28–80 (DMWSTQDLYDNPVTAVFQYEGLWRSCVQQSSGFTECRPYLTILGLPAMLQAVR). A helical transmembrane segment spans residues 81-101 (ALMIVGIVLSVIGLLVAIFAL). The Cytoplasmic portion of the chain corresponds to 102–122 (KCIRMGNMDDSAKAKMTLTSG). A helical membrane pass occupies residues 123–143 (IMFIIAGLCAIAGVSVFANML). The Extracellular segment spans residues 144–174 (VTNFWMSTASMFTSMGGMVQTVQTRYTFGAA). The helical transmembrane segment at 175–195 (LFVGWVAGGLTLIGGVLMCIA) threads the bilayer. The segment at 195–261 (ACRGLAPEET…QSPPSKYDYV (67 aa)) is required for role in regulation of RANKL-induced osteoclast differentiation. Over 196–261 (CRGLAPEETN…QSPPSKYDYV (66 aa)) the chain is Cytoplasmic. A Phosphoserine modification is found at Ser-214. The tract at residues 228–261 (SSGFESNTRNKKIYDGGARTEDEGQSPPSKYDYV) is disordered. Residues 239–249 (KIYDGGARTED) show a composition bias toward basic and acidic residues.

This sequence belongs to the claudin family. In terms of assembly, interacts with TJP2/ZO-2. Interacts with TJP1/ZO-1. Interacts with YAP1 (phosphorylated); the interaction sequesters YAP1 away from the nucleus and thereby restricts transcription of YAP1 target genes. Interacts with CLDN19.

The protein resides in the cell junction. It localises to the tight junction. Its subcellular location is the cell membrane. Involved in alveolar fluid homeostasis via regulation of alveolar epithelial tight junction composition and therefore ion transport and solute permeability, potentially via downstream regulation of the actin cytoskeleton organization and beta-2-adrenergic signaling. Required for lung alveolarization and maintenance of the paracellular alveolar epithelial barrier. Acts to maintain epithelial progenitor cell proliferation and organ size, via regulation of YAP1 localization away from the nucleus and thereby restriction of YAP1 target gene transcription. Acts as a negative regulator of RANKL-induced osteoclast differentiation, potentially via relocation of TJP2/ZO-2 away from the nucleus, subsequently involved in bone resorption in response to calcium deficiency. Mediates the osteoprotective effects of estrogen, potentially via acting downstream of estrogen signaling independently of RANKL signaling pathways. The protein is Claudin-18 (CLDN18) of Bos taurus (Bovine).